A 107-amino-acid chain; its full sequence is Nucleoid-associated protein NE0434 (107 aa).

This sequence belongs to the YbaB/EbfC family. In terms of assembly, homodimer.

It is found in the cytoplasm. Its subcellular location is the nucleoid. Its function is as follows. Binds to DNA and alters its conformation. May be involved in regulation of gene expression, nucleoid organization and DNA protection. This Nitrosomonas europaea (strain ATCC 19718 / CIP 103999 / KCTC 2705 / NBRC 14298) protein is Nucleoid-associated protein NE0434.